Here is a 299-residue protein sequence, read N- to C-terminus: Ribosomal protein L11 methyltransferase (299 aa).

4 residues coordinate S-adenosyl-L-methionine: T139, G163, D185, and N232.

It belongs to the methyltransferase superfamily. PrmA family.

It is found in the cytoplasm. The enzyme catalyses L-lysyl-[protein] + 3 S-adenosyl-L-methionine = N(6),N(6),N(6)-trimethyl-L-lysyl-[protein] + 3 S-adenosyl-L-homocysteine + 3 H(+). In terms of biological role, methylates ribosomal protein L11. This Crocosphaera subtropica (strain ATCC 51142 / BH68) (Cyanothece sp. (strain ATCC 51142)) protein is Ribosomal protein L11 methyltransferase.